The chain runs to 431 residues: Chaperone SurA (431 aa).

A signal peptide spans 1–20 (MKNWRTFILGLALCANGALA). PpiC domains follow at residues 171 to 272 (GAEF…KVND) and 282 to 382 (VTEV…QLID).

It is found in the periplasm. The enzyme catalyses [protein]-peptidylproline (omega=180) = [protein]-peptidylproline (omega=0). Functionally, chaperone involved in the correct folding and assembly of outer membrane proteins. Recognizes specific patterns of aromatic residues and the orientation of their side chains, which are found more frequently in integral outer membrane proteins. May act in both early periplasmic and late outer membrane-associated steps of protein maturation. The protein is Chaperone SurA of Sodalis glossinidius (strain morsitans).